We begin with the raw amino-acid sequence, 125 residues long: Small ribosomal subunit protein eS8 (125 aa).

The protein belongs to the eukaryotic ribosomal protein eS8 family. As to quaternary structure, part of the 30S ribosomal subunit.

This Methanosarcina acetivorans (strain ATCC 35395 / DSM 2834 / JCM 12185 / C2A) protein is Small ribosomal subunit protein eS8.